Here is a 236-residue protein sequence, read N- to C-terminus: MDNKKFLDFLKQNRIEPKNLSIYLEALTHKSYANEHKLTKNYQRLEFLGDACVEWVISNFIFNYKIKDNEKMRSLDEGEMTRARSNMVRSEILSYAAKDLGLTDFLMIGVGLEQDQSARMEKIYEDIFEAFIGAVAQDQGIKKVSLILEKTLIKYFREGQINYQKDYKTIFQEQAQRINKKPIMYKLVRNEGDKKEVHLVWNDLIYGIGIASTRKEAEILAAKNAILKLDDYTKKA.

The 135-residue stretch at 6–140 folds into the RNase III domain; that stretch reads FLDFLKQNRI…FIGAVAQDQG (135 aa). Glutamate 46 serves as a coordination point for Mg(2+). The active site involves aspartate 50. Positions 126 and 129 each coordinate Mg(2+). Glutamate 129 is an active-site residue. Positions 166–231 constitute a DRBM domain; the sequence is DYKTIFQEQA…AKNAILKLDD (66 aa).

It belongs to the ribonuclease III family. In terms of assembly, homodimer. Mg(2+) serves as cofactor.

The protein localises to the cytoplasm. The catalysed reaction is Endonucleolytic cleavage to 5'-phosphomonoester.. Functionally, digests double-stranded RNA. Involved in the processing of primary rRNA transcript to yield the immediate precursors to the large and small rRNAs (23S and 16S). Processes some mRNAs, and tRNAs when they are encoded in the rRNA operon. Processes pre-crRNA and tracrRNA of type II CRISPR loci if present in the organism. In Ureaplasma parvum serovar 3 (strain ATCC 700970), this protein is Ribonuclease 3.